The following is a 246-amino-acid chain: Ribonuclease PH (246 aa).

Phosphate is bound by residues R91 and G129–R131.

Belongs to the RNase PH family. Homohexameric ring arranged as a trimer of dimers.

The catalysed reaction is tRNA(n+1) + phosphate = tRNA(n) + a ribonucleoside 5'-diphosphate. Functionally, phosphorolytic 3'-5' exoribonuclease that plays an important role in tRNA 3'-end maturation. Removes nucleotide residues following the 3'-CCA terminus of tRNAs; can also add nucleotides to the ends of RNA molecules by using nucleoside diphosphates as substrates, but this may not be physiologically important. Probably plays a role in initiation of 16S rRNA degradation (leading to ribosome degradation) during starvation. The sequence is that of Ribonuclease PH from Burkholderia ambifaria (strain ATCC BAA-244 / DSM 16087 / CCUG 44356 / LMG 19182 / AMMD) (Burkholderia cepacia (strain AMMD)).